Here is a 680-residue protein sequence, read N- to C-terminus: DNA-directed RNA polymerase subunit beta' (680 aa).

Residues cysteine 69, cysteine 71, cysteine 87, and cysteine 90 each coordinate Zn(2+). Mg(2+) contacts are provided by aspartate 489, aspartate 491, and aspartate 493.

It belongs to the RNA polymerase beta' chain family. RpoC1 subfamily. As to quaternary structure, in plastids the minimal PEP RNA polymerase catalytic core is composed of four subunits: alpha, beta, beta', and beta''. When a (nuclear-encoded) sigma factor is associated with the core the holoenzyme is formed, which can initiate transcription. Mg(2+) serves as cofactor. Requires Zn(2+) as cofactor.

The protein resides in the plastid. The protein localises to the chloroplast. It catalyses the reaction RNA(n) + a ribonucleoside 5'-triphosphate = RNA(n+1) + diphosphate. Its function is as follows. DNA-dependent RNA polymerase catalyzes the transcription of DNA into RNA using the four ribonucleoside triphosphates as substrates. This is DNA-directed RNA polymerase subunit beta' from Ranunculus macranthus (Large buttercup).